A 384-amino-acid chain; its full sequence is Anhydro-N-acetylmuramic acid kinase (384 aa).

Residue 12-19 coordinates ATP; the sequence is GTSLDGVD.

It belongs to the anhydro-N-acetylmuramic acid kinase family.

It catalyses the reaction 1,6-anhydro-N-acetyl-beta-muramate + ATP + H2O = N-acetyl-D-muramate 6-phosphate + ADP + H(+). It functions in the pathway amino-sugar metabolism; 1,6-anhydro-N-acetylmuramate degradation. Its pathway is cell wall biogenesis; peptidoglycan recycling. Functionally, catalyzes the specific phosphorylation of 1,6-anhydro-N-acetylmuramic acid (anhMurNAc) with the simultaneous cleavage of the 1,6-anhydro ring, generating MurNAc-6-P. Is required for the utilization of anhMurNAc either imported from the medium or derived from its own cell wall murein, and thus plays a role in cell wall recycling. The polypeptide is Anhydro-N-acetylmuramic acid kinase (Cronobacter sakazakii (strain ATCC BAA-894) (Enterobacter sakazakii)).